The following is a 217-amino-acid chain: tRNA (guanine-N(7)-)-methyltransferase (217 aa).

Residues Glu-43, Asp-68, Asn-101, and Asn-123 each contribute to the S-adenosyl-L-methionine site. Position 127 (Lys-127) interacts with substrate. The interval 129–134 (RHNKRR) is interaction with RNA. Residues Asp-159 and 196 to 199 (TEYE) contribute to the substrate site.

Belongs to the class I-like SAM-binding methyltransferase superfamily. TrmB family.

The catalysed reaction is guanosine(46) in tRNA + S-adenosyl-L-methionine = N(7)-methylguanosine(46) in tRNA + S-adenosyl-L-homocysteine. It participates in tRNA modification; N(7)-methylguanine-tRNA biosynthesis. Functionally, catalyzes the formation of N(7)-methylguanine at position 46 (m7G46) in tRNA. This chain is tRNA (guanine-N(7)-)-methyltransferase, found in Clostridium botulinum (strain 657 / Type Ba4).